A 122-amino-acid polypeptide reads, in one-letter code: Fluoride-specific ion channel FluC (122 aa).

4 helical membrane passes run 4-24 (LAVL…SIFI), 33-53 (LGTM…SIYL), 66-86 (LLIT…LEGI), and 95-115 (LKAF…VALG). Na(+) is bound by residues G73 and T76.

Belongs to the fluoride channel Fluc/FEX (TC 1.A.43) family.

It is found in the cell inner membrane. It catalyses the reaction fluoride(in) = fluoride(out). With respect to regulation, na(+) is not transported, but it plays an essential structural role and its presence is essential for fluoride channel function. In terms of biological role, fluoride-specific ion channel. Important for reducing fluoride concentration in the cell, thus reducing its toxicity. This chain is Fluoride-specific ion channel FluC, found in Hydrogenobaculum sp. (strain Y04AAS1).